Reading from the N-terminus, the 326-residue chain is Beta-ketoacyl-[acyl-carrier-protein] synthase III (326 aa).

Catalysis depends on residues cysteine 111 and histidine 252. The ACP-binding stretch occupies residues 253 to 257; sequence QANIR. The active site involves asparagine 282.

This sequence belongs to the thiolase-like superfamily. FabH family. Homodimer.

It is found in the plastid. The protein localises to the chloroplast. The enzyme catalyses malonyl-[ACP] + acetyl-CoA + H(+) = 3-oxobutanoyl-[ACP] + CO2 + CoA. Its pathway is lipid metabolism; fatty acid biosynthesis. Catalyzes the condensation reaction of fatty acid synthesis by the addition to an acyl acceptor of two carbons from malonyl-ACP. Catalyzes the first condensation reaction which initiates fatty acid synthesis and may therefore play a role in governing the total rate of fatty acid production. Possesses both acetoacetyl-ACP synthase and acetyl transacylase activities. Its substrate specificity determines the biosynthesis of branched-chain and/or straight-chain of fatty acids. This is Beta-ketoacyl-[acyl-carrier-protein] synthase III from Porphyra umbilicalis (Purple laver).